A 124-amino-acid chain; its full sequence is uncharacterized protein (124 aa).

Not required for the biogenesis of c-type cytochromes. This is an uncharacterized protein from Rhodobacter capsulatus (strain ATCC BAA-309 / NBRC 16581 / SB1003).